The chain runs to 477 residues: Putative multidrug resistance protein MdtD (477 aa).

The next 14 membrane-spanning stretches (helical) occupy residues 13-33 (LWIV…VNTA), 50-70 (SVIV…GWLA), 73-93 (VGVQ…SILC), 107-127 (VVQG…VMKI), 139-159 (FVTL…GFLV), 166-186 (WIFL…LLLM), 196-216 (FDIS…LALD), 220-240 (GMGL…AALA), 268-288 (LTAS…TPLF), 291-311 (VGMG…IIGS), 326-348 (GYRN…FPLV), 352-374 (GWIW…RFSA), 394-414 (LLSM…GILI), and 432-452 (AFIY…LAFA).

Belongs to the major facilitator superfamily. TCR/Tet family.

It is found in the cell inner membrane. The polypeptide is Putative multidrug resistance protein MdtD (Serratia proteamaculans (strain 568)).